The following is a 291-amino-acid chain: Aspartate carbamoyltransferase catalytic subunit (291 aa).

Carbamoyl phosphate-binding residues include arginine 49 and threonine 50. Lysine 77 is an L-aspartate binding site. Positions 99, 127, and 130 each coordinate carbamoyl phosphate. Arginine 160 and arginine 210 together coordinate L-aspartate. Residues glycine 249 and proline 250 each coordinate carbamoyl phosphate.

It belongs to the aspartate/ornithine carbamoyltransferase superfamily. ATCase family. Heterododecamer (2C3:3R2) of six catalytic PyrB chains organized as two trimers (C3), and six regulatory PyrI chains organized as three dimers (R2).

It catalyses the reaction carbamoyl phosphate + L-aspartate = N-carbamoyl-L-aspartate + phosphate + H(+). The protein operates within pyrimidine metabolism; UMP biosynthesis via de novo pathway; (S)-dihydroorotate from bicarbonate: step 2/3. Functionally, catalyzes the condensation of carbamoyl phosphate and aspartate to form carbamoyl aspartate and inorganic phosphate, the committed step in the de novo pyrimidine nucleotide biosynthesis pathway. The sequence is that of Aspartate carbamoyltransferase catalytic subunit from Sulfurimonas denitrificans (strain ATCC 33889 / DSM 1251) (Thiomicrospira denitrificans (strain ATCC 33889 / DSM 1251)).